The primary structure comprises 606 residues: Mitogen-activated protein kinase kinase kinase 7 (606 aa).

The segment at Met-1–Tyr-300 is interaction with MAPK8IP1. The region spanning Ile-36 to Phe-291 is the Protein kinase domain. ATP contacts are provided by residues Val-42–Val-50 and Lys-63. Lys-72 is covalently cross-linked (Glycyl lysine isopeptide (Lys-Gly) (interchain with G-Cter in ubiquitin)). Asp-156 serves as the catalytic Proton acceptor. Lys-158 is covalently cross-linked (Glycyl lysine isopeptide (Lys-Gly) (interchain with G-Cter in ubiquitin)). Residues Thr-184 and Thr-187 each carry the (Microbial infection) O-acetylthreonine; by Yersinia YopJ; alternate modification. Phosphothreonine; by autocatalysis; alternate occurs at positions 184 and 187. Position 192 is a phosphoserine; by autocatalysis (Ser-192). Residue Lys-209 forms a Glycyl lysine isopeptide (Lys-Gly) (interchain with G-Cter in ubiquitin) linkage. The interval Pro-301 to Val-338 is disordered. Residues Asp-306–Val-338 are compositionally biased toward polar residues. Position 341 is a (Microbial infection) O-acetylthreonine; by Yersinia YopJ; alternate (Thr-341). The interval Lys-354–Asp-391 is disordered. Over residues Ser-361–Ser-375 the composition is skewed to low complexity. Ser-367, Ser-389, and Ser-439 each carry phosphoserine. Over residues Leu-443–Gln-452 the composition is skewed to polar residues. A disordered region spans residues Leu-443 to Asp-493. Residues Thr-444, Thr-446, and Thr-448 each carry the (Microbial infection) O-acetylthreonine; by Yersinia YopJ; alternate modification. Positions Val-453 to Arg-463 are enriched in low complexity. Ser-455 is subject to Phosphoserine. The segment covering Met-464–Glu-473 has biased composition (polar residues). (Microbial infection) O-acetylthreonine; by Yersinia YopJ; alternate is present on Thr-467.

It belongs to the protein kinase superfamily. STE Ser/Thr protein kinase family. MAP kinase kinase kinase subfamily. As to quaternary structure, can form homodimer. Binds both upstream activators and downstream substrates in multimolecular complexes. Interacts with TAB1/MAP3K7IP1, TAB2/MAP3K7IP2 and TAB3/MAP3K7IP3. Identified in the TRIKA2 complex composed of MAP3K7/TAK1, TAB1/MAP3K7IP1 and TAB2/MAP3K7IP2. Interacts with PPM1L and PPM1B/PP2CB. Interaction with PP2A and PPP6C leads to its repressed activity. Interacts with TRAF6 and TAB1/MAP3K7IP1; during IL-1 signaling. Interacts with TAOK1 and TAOK2; interaction with TAOK2 interferes with MAP3K7 interaction with IKKA, thus preventing NF-kappa-B activation. Interacts with DYNC2I2 (via WD domains). Interacts with CYLD and RBCK1. Interacts with TGFBR1; induces MAP3K7/TAK1 activation by TRAF6. Interacts with MAPK8IP1 and SMAD6. Interacts with isoform 1 of VRK2. Interacts with DAB2; the interaction is induced by TGF-beta stimulation and may mediate TGF-beta stimulated JNK activation. Interacts with TRIM5. Part of a complex containing ITCH, NDFIP1 and MAP3K7. Interacts with IFIT5; the interaction synergizes the recruitment of IKK to MAP3K7 and enhances IKK phosphorylation. Interacts with PLEKHM1 (via N- and C-terminus). Interacts with TRIM8. Found in a complex with SH3RF1, RAC2, MAP2K7/MKK7, MAPK8IP1/JIP1, MAPK8/JNK1 and MAPK9/JNK2. Interacts with SASH1. Interacts with RIPK1. (Microbial infection) Interacts with herpes simplex virus 2 protein US2; this interaction induces MAP3K7 phosphorylation and subsequent activation. The cofactor is Mg(2+). In terms of processing, association with TAB1/MAP3K7IP1 promotes autophosphorylation at Ser-192 and subsequent activation. Association with TAB2/MAP3K7IP2, itself associated with free unanchored Lys-63 polyubiquitin chain, promotes autophosphorylation and subsequent activation of MAP3K7. Dephosphorylation at Ser-192 by PPM1B/PP2CB and at Thr-187 by PP2A and PPP6C leads to inactivation. Post-translationally, 'Lys-48'-linked polyubiquitination at Lys-72 is induced by TNFalpha, and leads to proteasomal degradation. Undergoes 'Lys-48'-linked polyubiquitination catalyzed by ITCH. Requires 'Lys-63'-linked polyubiquitination for autophosphorylation and subsequent activation. 'Lys-63'-linked ubiquitination does not lead to proteasomal degradation. Deubiquitinated by CYLD, a protease that selectively cleaves 'Lys-63'-linked ubiquitin chains. Deubiquitinated by Y.enterocolitica YopP. Deubiquitinated by USP19; leading to negative regulation of TNF-alpha- and IL-1beta-triggered NF-kappa-B activation. (Microbial infection) Cleaved and inactivated by the proteases 3C of coxsackievirus A16 and human enterovirus D68, allowing the virus to disrupt TRAF6-triggered NF-kappa-B induction. In terms of processing, (Microbial infection) Acetylation of Thr-184 and Thr-187 by Yersinia YopJ prevents phosphorylation and activation, thus blocking the MAPK signaling pathway. In terms of tissue distribution, isoform 1A is the most abundant in ovary, skeletal muscle, spleen and blood mononuclear cells. Isoform 1B is highly expressed in brain, kidney and small intestine. Isoform 1C is the major form in prostate. Isoform 1D is the less abundant form.

It is found in the cytoplasm. Its subcellular location is the cell membrane. The catalysed reaction is L-seryl-[protein] + ATP = O-phospho-L-seryl-[protein] + ADP + H(+). It catalyses the reaction L-threonyl-[protein] + ATP = O-phospho-L-threonyl-[protein] + ADP + H(+). Activated by pro-inflammatory cytokines and in response to physical and chemical stresses, including osmotic stress, oxidative stress, arsenic and ultraviolet light irradiation. Activated by 'Lys-63'-linked polyubiquitination and by autophosphorylation. Association with TAB1/MAP3K7IP1 and TAB2/MAP3K7IP2 promotes activation through autophosphorylation, whereas PPM1B/PP2CB, PP2A and PPP6C dephosphorylation leads to inactivation. Ceramides are also able to activate MAP3K7/TAK1. Its function is as follows. Serine/threonine kinase which acts as an essential component of the MAP kinase signal transduction pathway. Plays an important role in the cascades of cellular responses evoked by changes in the environment. Mediates signal transduction of TRAF6, various cytokines including interleukin-1 (IL-1), transforming growth factor-beta (TGFB), TGFB-related factors like BMP2 and BMP4, toll-like receptors (TLR), tumor necrosis factor receptor CD40 and B-cell receptor (BCR). Once activated, acts as an upstream activator of the MKK/JNK signal transduction cascade and the p38 MAPK signal transduction cascade through the phosphorylation and activation of several MAP kinase kinases like MAP2K1/MEK1, MAP2K3/MKK3, MAP2K6/MKK6 and MAP2K7/MKK7. These MAP2Ks in turn activate p38 MAPKs and c-jun N-terminal kinases (JNKs); both p38 MAPK and JNK pathways control the transcription factors activator protein-1 (AP-1). Independently of MAP2Ks and p38 MAPKs, acts as a key activator of NF-kappa-B by promoting activation of the I-kappa-B-kinase (IKK) core complex. Mechanistically, recruited to polyubiquitin chains of RIPK2 and IKBKG/NEMO via TAB2/MAP3K7IP2 and TAB3/MAP3K7IP3, and catalyzes phosphorylation and activation of IKBKB/IKKB component of the IKK complex, leading to NF-kappa-B activation. In osmotic stress signaling, plays a major role in the activation of MAPK8/JNK1, but not that of NF-kappa-B. Promotes TRIM5 capsid-specific restriction activity. Phosphorylates RIPK1 at 'Ser-321' which positively regulates RIPK1 interaction with RIPK3 to promote necroptosis but negatively regulates RIPK1 kinase activity and its interaction with FADD to mediate apoptosis. Phosphorylates STING1 in response to cGAMP-activation, promoting association between STEEP1 and STING1 and STING1 translocation to COPII vesicles. The protein is Mitogen-activated protein kinase kinase kinase 7 of Homo sapiens (Human).